A 508-amino-acid polypeptide reads, in one-letter code: General transcription factor IIF subunit 1 (508 aa).

An N-acetylalanine modification is found at alanine 2. Threonine 156 bears the Phosphothreonine mark. Residues methionine 177–aspartate 448 are disordered. Residues serine 217, serine 218, serine 221, and serine 224 each carry the phosphoserine modification. Over residues serine 232–lysine 251 the composition is skewed to basic residues. Composition is skewed to acidic residues over residues aspartate 255–glutamate 270 and glutamate 303–glutamate 325. Threonine 331 is subject to Phosphothreonine. Acidic residues predominate over residues aspartate 343–serine 355. Residues alanine 364–arginine 374 are compositionally biased toward basic residues. 4 positions are modified to phosphoserine: serine 377, serine 380, serine 381, and serine 385. Polar residues predominate over residues glycine 378–glycine 388. Threonine 389 is modified (phosphothreonine). The span at threonine 389–serine 406 shows a compositional bias: low complexity. Residue serine 391 is modified to Phosphoserine. Residue lysine 407 is modified to N6-acetyllysine. Polar residues predominate over residues glycine 428 to valine 443. Phosphoserine is present on residues serine 431, serine 433, and serine 436. Threonine 437 carries the phosphothreonine modification. At serine 440 the chain carries Phosphoserine.

It belongs to the TFIIF alpha subunit family. Heterodimer of an alpha and a beta subunit. Interacts with GTF2F2, CTDP1, TAF6/TAFII80 and URI1. Interacts with GTF2B (via C-terminus and preferentially via acetylated form); this interaction prevents binding of GTF2B to GTF2F2. Part of TBP-based Pol II pre-initiation complex (PIC), in which Pol II core assembles with general transcription factors and other specific initiation factors including GTF2E1, GTF2E2, GTF2F1, GTF2F2, TCEA1, ERCC2, ERCC3, GTF2H2, GTF2H3, GTF2H4, GTF2H5, GTF2A1, GTF2A2, GTF2B and TBP; this large multi-subunit PIC complex mediates DNA unwinding and targets Pol II core to the transcription start site where the first phosphodiester bond forms. Phosphorylated on Ser and other residues by TAF1 and casein kinase II-like kinases.

It localises to the nucleus. TFIIF is a general transcription initiation factor that binds to RNA polymerase II and helps to recruit it to the initiation complex in collaboration with TFIIB. It promotes transcription elongation. The polypeptide is General transcription factor IIF subunit 1 (Gtf2f1) (Rattus norvegicus (Rat)).